A 347-amino-acid chain; its full sequence is L-threonine 3-dehydrogenase (347 aa).

Residue C42 coordinates Zn(2+). Residues T44 and H47 each act as charge relay system in the active site. Zn(2+) contacts are provided by H67, E68, C97, C100, C103, and C111. NAD(+) is bound by residues I179, E199, R204, 266–268 (LGL), and 291–292 (IT).

It belongs to the zinc-containing alcohol dehydrogenase family. As to quaternary structure, homotetramer. Zn(2+) is required as a cofactor.

Its subcellular location is the cytoplasm. It carries out the reaction L-threonine + NAD(+) = (2S)-2-amino-3-oxobutanoate + NADH + H(+). It functions in the pathway amino-acid degradation; L-threonine degradation via oxydo-reductase pathway; glycine from L-threonine: step 1/2. In terms of biological role, catalyzes the NAD(+)-dependent oxidation of L-threonine to 2-amino-3-ketobutyrate. In Caldanaerobacter subterraneus subsp. tengcongensis (strain DSM 15242 / JCM 11007 / NBRC 100824 / MB4) (Thermoanaerobacter tengcongensis), this protein is L-threonine 3-dehydrogenase.